The primary structure comprises 507 residues: Protoheme IX farnesyltransferase, mitochondrial (507 aa).

The span at 72–90 shows a compositional bias: low complexity; that stretch reads STSASASTTHDSTLSSSPT. Positions 72 to 136 are disordered; that stretch reads STSASASTTH…RGEKPLPPDA (65 aa). The span at 99-111 shows a compositional bias: basic residues; the sequence is KDHKIAPHRKRQA. The next 8 helical transmembrane spans lie at 166-186, 199-219, 248-268, 270-290, 298-318, 339-359, 392-412, and 441-461; these read LTML…VPEM, PLTL…ANAL, AAVL…YFGV, PTVS…YTPL, TWIG…AAAG, IGGW…FMAL, FVFI…WSFA, and GLFW…LLHK.

Belongs to the UbiA prenyltransferase family.

The protein localises to the mitochondrion membrane. The enzyme catalyses heme b + (2E,6E)-farnesyl diphosphate + H2O = Fe(II)-heme o + diphosphate. Functionally, converts protoheme IX and farnesyl diphosphate to heme O. In Gibberella zeae (strain ATCC MYA-4620 / CBS 123657 / FGSC 9075 / NRRL 31084 / PH-1) (Wheat head blight fungus), this protein is Protoheme IX farnesyltransferase, mitochondrial (COX10).